A 157-amino-acid polypeptide reads, in one-letter code: Protein Smg (157 aa).

It belongs to the Smg family.

This chain is Protein Smg, found in Klebsiella pneumoniae (strain 342).